Here is a 346-residue protein sequence, read N- to C-terminus: Acetylpolyamine amidohydrolase 1 (346 aa).

His-161 (proton donor/acceptor) is an active-site residue. Residues Asp-197, His-199, and Asp-286 each coordinate Zn(2+).

The protein belongs to the histone deacetylase family. As to quaternary structure, homodimer. It depends on Zn(2+) as a cofactor.

The catalysed reaction is N-acetylputrescine + H2O = putrescine + acetate. The enzyme catalyses N-acetylcadaverine + H2O = cadaverine + acetate. It catalyses the reaction N(1)-acetylspermine + H2O = spermine + acetate. It carries out the reaction N(1)-acetylspermidine + H2O = spermidine + acetate. It participates in amine and polyamine metabolism. Catalyzes the deacetylation of acetylated polyamines such as N-acetylputrescine, N-acetylcadaverine, N(1)-acetylspermine and N(1)-acetylspermidine. Plays an important role in the metabolism of acetylated polyamines in P.aeruginosa. Is involved in the degradation pathways of N-acetylputrescine and N-acetylcadaverine, that allow P.aeruginosa to utilize these acetylpolyamines as a carbon source under glucose starvation. In vitro, can also hydrolyze artificial trifluoroacetylated and acetylated lysine-derivatives. The sequence is that of Acetylpolyamine amidohydrolase 1 from Pseudomonas aeruginosa (strain ATCC 15692 / DSM 22644 / CIP 104116 / JCM 14847 / LMG 12228 / 1C / PRS 101 / PAO1).